We begin with the raw amino-acid sequence, 338 residues long: Tetraacyldisaccharide 4'-kinase (338 aa).

63–70 (TVGGSGKT) is a binding site for ATP.

Belongs to the LpxK family.

It carries out the reaction a lipid A disaccharide + ATP = a lipid IVA + ADP + H(+). The protein operates within glycolipid biosynthesis; lipid IV(A) biosynthesis; lipid IV(A) from (3R)-3-hydroxytetradecanoyl-[acyl-carrier-protein] and UDP-N-acetyl-alpha-D-glucosamine: step 6/6. Functionally, transfers the gamma-phosphate of ATP to the 4'-position of a tetraacyldisaccharide 1-phosphate intermediate (termed DS-1-P) to form tetraacyldisaccharide 1,4'-bis-phosphate (lipid IVA). The protein is Tetraacyldisaccharide 4'-kinase of Shewanella loihica (strain ATCC BAA-1088 / PV-4).